The sequence spans 113 residues: UPF0321 protein C569.02c (113 aa).

A signal peptide spans 1–17 (MLLLFCICCAFIKLVLA). N-linked (GlcNAc...) asparagine glycosylation is found at Asn-20, Asn-39, and Asn-65.

Belongs to the UPF0321 family.

This Schizosaccharomyces pombe (strain 972 / ATCC 24843) (Fission yeast) protein is UPF0321 protein C569.02c.